A 355-amino-acid chain; its full sequence is UDP-3-O-acylglucosamine N-acyltransferase (355 aa).

Residue H258 is the Proton acceptor of the active site.

The protein belongs to the transferase hexapeptide repeat family. LpxD subfamily. Homotrimer.

The catalysed reaction is a UDP-3-O-[(3R)-3-hydroxyacyl]-alpha-D-glucosamine + a (3R)-hydroxyacyl-[ACP] = a UDP-2-N,3-O-bis[(3R)-3-hydroxyacyl]-alpha-D-glucosamine + holo-[ACP] + H(+). It functions in the pathway bacterial outer membrane biogenesis; LPS lipid A biosynthesis. Functionally, catalyzes the N-acylation of UDP-3-O-acylglucosamine using 3-hydroxyacyl-ACP as the acyl donor. Is involved in the biosynthesis of lipid A, a phosphorylated glycolipid that anchors the lipopolysaccharide to the outer membrane of the cell. The polypeptide is UDP-3-O-acylglucosamine N-acyltransferase (Bradyrhizobium sp. (strain ORS 278)).